The primary structure comprises 420 residues: L-rhamnose isomerase (420 aa).

Mn(2+)-binding residues include histidine 264, aspartate 296, and aspartate 298.

This sequence belongs to the rhamnose isomerase family. The cofactor is Mn(2+).

It is found in the cytoplasm. It carries out the reaction L-rhamnopyranose = L-rhamnulose. The protein operates within carbohydrate degradation; L-rhamnose degradation; glycerone phosphate from L-rhamnose: step 1/3. In terms of biological role, catalyzes the interconversion of L-rhamnose and L-rhamnulose. This is L-rhamnose isomerase from Listeria monocytogenes serotype 4b (strain CLIP80459).